Reading from the N-terminus, the 425-residue chain is Serine--tRNA ligase (425 aa).

Thr-231 to Glu-233 is an L-serine binding site. An ATP-binding site is contributed by Arg-262 to Glu-264. Glu-285 contacts L-serine. Residue Glu-349–Ser-352 participates in ATP binding. Ser-385 serves as a coordination point for L-serine.

The protein belongs to the class-II aminoacyl-tRNA synthetase family. Type-1 seryl-tRNA synthetase subfamily. As to quaternary structure, homodimer. The tRNA molecule binds across the dimer.

The protein localises to the cytoplasm. The catalysed reaction is tRNA(Ser) + L-serine + ATP = L-seryl-tRNA(Ser) + AMP + diphosphate + H(+). The enzyme catalyses tRNA(Sec) + L-serine + ATP = L-seryl-tRNA(Sec) + AMP + diphosphate + H(+). Its pathway is aminoacyl-tRNA biosynthesis; selenocysteinyl-tRNA(Sec) biosynthesis; L-seryl-tRNA(Sec) from L-serine and tRNA(Sec): step 1/1. Its function is as follows. Catalyzes the attachment of serine to tRNA(Ser). Is also able to aminoacylate tRNA(Sec) with serine, to form the misacylated tRNA L-seryl-tRNA(Sec), which will be further converted into selenocysteinyl-tRNA(Sec). The polypeptide is Serine--tRNA ligase (Bartonella tribocorum (strain CIP 105476 / IBS 506)).